The chain runs to 520 residues: Intermediate filament protein ON3 (520 aa).

Low complexity predominate over residues 1-27; that stretch reads MSYTKKTSYSVKSSSSGSVPRSFSSMS. Residues 1–33 form a disordered region; it reads MSYTKKTSYSVKSSSSGSVPRSFSSMSYSGPSV. The segment at 1-108 is head; sequence MSYTKKTSYS…DPNIQVVRTQ (108 aa). The segment at 109-144 is coil 1A; sequence EKEQMKSLNNRFASFIDKVRFLEQQNKMLETKWSLL. Residues 109 to 420 enclose the IF rod domain; it reads EKEQMKSLNN…KLLEGEEDRL (312 aa). The interval 145–157 is linker 1; that stretch reads QNQTATRSNIDAM. Residues 158 to 253 form a coil 1B region; it reads FEAYINNLRR…QIFEEEIREL (96 aa). The linker 12 stretch occupies residues 254 to 273; that stretch reads QSQIKDTSVVVEMDNSRNLD. Residues 274 to 420 are coil 2; the sequence is MDAIVAEVRA…KLLEGEEDRL (147 aa). Positions 421–520 are tail; it reads LSGIKSVNIS…VSESSEVVQD (100 aa).

The protein belongs to the intermediate filament family.

Functionally, one of the non-neuronal predominant intermediate filament proteins of the visual pathway. The sequence is that of Intermediate filament protein ON3 from Carassius auratus (Goldfish).